We begin with the raw amino-acid sequence, 166 residues long: MSIAYDLLLSILIYLPAFVANGSGPFIKRGTPIDFGKNFVDGRRLFGDGKTFEGLIVALTFGTTVGVIISKFFTAEWTLISFLESLFAMIGDMIGAFIKRRLGIPRGGRVLGLDQLDFVLGASLILVLMRVNITWYQFLFICGLAFFLHQGTNYVAYLLKIKNVPW.

5 helical membrane-spanning segments follow: residues 7-27 (LLLSILIYLPAFVANGSGPFI), 55-75 (LIVALTFGTTVGVIISKFFTA), 78-98 (TLISFLESLFAMIGDMIGAFI), 116-136 (LDFVLGASLILVLMRVNITWY), and 138-158 (FLFICGLAFFLHQGTNYVAYL).

The protein belongs to the CDP-archaeol synthase family. Mg(2+) serves as cofactor.

The protein localises to the cell membrane. It carries out the reaction 2,3-bis-O-(geranylgeranyl)-sn-glycerol 1-phosphate + CTP + H(+) = CDP-2,3-bis-O-(geranylgeranyl)-sn-glycerol + diphosphate. Its pathway is membrane lipid metabolism; glycerophospholipid metabolism. Catalyzes the formation of CDP-2,3-bis-(O-geranylgeranyl)-sn-glycerol (CDP-archaeol) from 2,3-bis-(O-geranylgeranyl)-sn-glycerol 1-phosphate (DGGGP) and CTP. This reaction is the third ether-bond-formation step in the biosynthesis of archaeal membrane lipids. This chain is CDP-archaeol synthase, found in Saccharolobus islandicus (strain L.S.2.15 / Lassen #1) (Sulfolobus islandicus).